The sequence spans 195 residues: MPKLGMREIRRAQLIDATLRSIDEAGLSGTTLASVAQRANISTGIVSHYFGDKDGLLEATMRHVLRDLWAATARHRAAASDAPRARLRAVVAANFDDTQISAPVMKTWLAFWSQSMHEPTLRRLQHVNTRRLYSNLCAEFAKALPPARAREAASGLAALIDGLWLRGALAGGPFDTKAALKLANDYIDLLLAPRA.

One can recognise an HTH tetR-type domain in the interval 8-68 (EIRRAQLIDA…ATMRHVLRDL (61 aa)). Residues 31-50 (TLASVAQRANISTGIVSHYF) constitute a DNA-binding region (H-T-H motif).

Its pathway is amine and polyamine biosynthesis; betaine biosynthesis via choline pathway [regulation]. Repressor involved in the biosynthesis of the osmoprotectant glycine betaine. It represses transcription of the choline transporter BetT and the genes of BetAB involved in the synthesis of glycine betaine. This is HTH-type transcriptional regulator BetI from Burkholderia thailandensis (strain ATCC 700388 / DSM 13276 / CCUG 48851 / CIP 106301 / E264).